We begin with the raw amino-acid sequence, 308 residues long: Cell division protein FtsX (308 aa).

At 1 to 24 the chain is on the extracellular side; the sequence is MISRFFRHLFEALKSLKRNGWMTV. The chain crosses the membrane as a helical span at residues 25–45; that stretch reads AAVSSVMITLTLVAIFASVIF. Over 46–178 the chain is Cytoplasmic; the sequence is NTAKLATDIE…NTERLFKLAS (133 aa). The chain crosses the membrane as a helical span at residues 179–199; the sequence is FIRVWGLGIAALLIFIAAFLI. At 200 to 236 the chain is on the extracellular side; sequence SNTIRITIISRSREIQIMRLVGAKNSYIRGPFLLEGA. A helical transmembrane segment spans residues 237-257; it reads FIGLLGAIAPSVLVFIVYQIV. Over 258–276 the chain is Cytoplasmic; sequence YQSVNKSLVGQNLSMISPD. Residues 277–297 traverse the membrane as a helical segment; the sequence is LFSPLMIALLFVIGVFIGSLG. Residues 298-308 lie on the Extracellular side of the membrane; sequence SGISMRRFLKI.

The protein belongs to the ABC-4 integral membrane protein family. FtsX subfamily. In terms of assembly, interacts with FtsE. Interacts (via large extracellular loop) with PcsB (via N-terminal coiled coil domain). This interaction directs PcsB to equatorial and septal sites of dividing cells.

It is found in the cell membrane. In terms of biological role, part of the ABC transporter FtsEX involved in asymmetric cellular division facilitating the initiation of sporulation. Required in maintaining normal growth and cellular morphology. This is Cell division protein FtsX from Streptococcus pneumoniae (strain ATCC BAA-255 / R6).